Reading from the N-terminus, the 243-residue chain is Ice-binding protein K3-B1 (243 aa).

Positions 1-20 are cleaved as a signal peptide; sequence MFSASSLLAVIALAISSVSA.

Belongs to the ice-binding protein family.

In terms of biological role, binds to the surface of ice crystals. Has low thermal hysteresis (TH) activity, which is the ability to lower the freezing point of an aqueous solution below its melting point. The TH activity of this protein is approximately 0.3 degrees Celsius at 11 mM. The sequence is that of Ice-binding protein K3-B1 from Typhula ishikariensis (Gray snow mold fungus).